We begin with the raw amino-acid sequence, 135 residues long: Retinol-binding protein 1 (135 aa).

The tract at residues 22-32 (RALDVNVALRK) is important for interaction with STRA6. 3 residues coordinate all-trans-retinol: Lys-41, Met-63, and Gln-109.

Belongs to the calycin superfamily. Fatty-acid binding protein (FABP) family. As to quaternary structure, interacts (only as retinol-free apoprotein) with STRA6.

It localises to the cytoplasm. It is found in the lipid droplet. Cytoplasmic retinol-binding protein. Accepts retinol from the transport protein STRA6, and thereby contributes to retinol uptake, storage and retinoid homeostasis. The protein is Retinol-binding protein 1 (Rbp1) of Mus musculus (Mouse).